The sequence spans 142 residues: Large ribosomal subunit protein uL13 (142 aa).

The protein belongs to the universal ribosomal protein uL13 family. Part of the 50S ribosomal subunit.

In terms of biological role, this protein is one of the early assembly proteins of the 50S ribosomal subunit, although it is not seen to bind rRNA by itself. It is important during the early stages of 50S assembly. This Polynucleobacter asymbioticus (strain DSM 18221 / CIP 109841 / QLW-P1DMWA-1) (Polynucleobacter necessarius subsp. asymbioticus) protein is Large ribosomal subunit protein uL13.